The primary structure comprises 982 residues: Glycine dehydrogenase (decarboxylating) (982 aa).

Lys721 bears the N6-(pyridoxal phosphate)lysine mark.

The protein belongs to the GcvP family. As to quaternary structure, the glycine cleavage system is composed of four proteins: P, T, L and H. It depends on pyridoxal 5'-phosphate as a cofactor.

The enzyme catalyses N(6)-[(R)-lipoyl]-L-lysyl-[glycine-cleavage complex H protein] + glycine + H(+) = N(6)-[(R)-S(8)-aminomethyldihydrolipoyl]-L-lysyl-[glycine-cleavage complex H protein] + CO2. Functionally, the glycine cleavage system catalyzes the degradation of glycine. The P protein binds the alpha-amino group of glycine through its pyridoxal phosphate cofactor; CO(2) is released and the remaining methylamine moiety is then transferred to the lipoamide cofactor of the H protein. The chain is Glycine dehydrogenase (decarboxylating) from Prochlorococcus marinus (strain MIT 9303).